The following is a 303-amino-acid chain: UDP-3-O-acyl-N-acetylglucosamine deacetylase (303 aa).

His78, His237, and Asp241 together coordinate Zn(2+). His264 serves as the catalytic Proton donor.

Belongs to the LpxC family. It depends on Zn(2+) as a cofactor.

It carries out the reaction a UDP-3-O-[(3R)-3-hydroxyacyl]-N-acetyl-alpha-D-glucosamine + H2O = a UDP-3-O-[(3R)-3-hydroxyacyl]-alpha-D-glucosamine + acetate. Its pathway is glycolipid biosynthesis; lipid IV(A) biosynthesis; lipid IV(A) from (3R)-3-hydroxytetradecanoyl-[acyl-carrier-protein] and UDP-N-acetyl-alpha-D-glucosamine: step 2/6. Catalyzes the hydrolysis of UDP-3-O-myristoyl-N-acetylglucosamine to form UDP-3-O-myristoylglucosamine and acetate, the committed step in lipid A biosynthesis. This is UDP-3-O-acyl-N-acetylglucosamine deacetylase from Pseudomonas fluorescens (strain Pf0-1).